The chain runs to 236 residues: uncharacterized protein (236 aa).

The region spanning 117-160 (RYLSKQTDRNEFITTAESYIGISKHKSTNITYKLPLKEQFCNMS) is the RPE1 insert domain.

This is an uncharacterized protein from Rickettsia prowazekii (strain Madrid E).